Reading from the N-terminus, the 128-residue chain is Ribonuclease pancreatic (128 aa).

The segment at 1–25 (KESSAKKFQRQHIDSSGSPSTNPNY) is disordered. The substrate site is built by Lys7 and Arg10. Residue His12 is the Proton acceptor of the active site. Residues 14–25 (DSSGSPSTNPNY) are compositionally biased toward polar residues. 4 disulfide bridges follow: Cys26–Cys84, Cys40–Cys95, Cys58–Cys110, and Cys65–Cys72. N-linked (GlcNAc...) asparagine glycosylation is present at Asn34. Residues 41–45 (KPVNT), Lys66, and Arg85 contribute to the substrate site. The active-site Proton donor is the His119.

It belongs to the pancreatic ribonuclease family. In terms of assembly, monomer. Interacts with and forms tight 1:1 complexes with RNH1. Dimerization of two such complexes may occur. Interaction with RNH1 inhibits this protein. Pancreas.

The protein localises to the secreted. The catalysed reaction is an [RNA] containing cytidine + H2O = an [RNA]-3'-cytidine-3'-phosphate + a 5'-hydroxy-ribonucleotide-3'-[RNA].. It carries out the reaction an [RNA] containing uridine + H2O = an [RNA]-3'-uridine-3'-phosphate + a 5'-hydroxy-ribonucleotide-3'-[RNA].. Its function is as follows. Endonuclease that catalyzes the cleavage of RNA on the 3' side of pyrimidine nucleotides. Acts on single-stranded and double-stranded RNA. The sequence is that of Ribonuclease pancreatic (RNASE1) from Proechimys guairae (Guaira spiny rat).